The following is a 111-amino-acid chain: Putative carnobacteriocin-B2 immunity protein (111 aa).

In terms of biological role, could impart immunity to carnobacteriocin-B2 to naturally sensitive host strains. The polypeptide is Putative carnobacteriocin-B2 immunity protein (Carnobacterium maltaromaticum (Carnobacterium piscicola)).